The primary structure comprises 415 residues: Lysosome-associated membrane glycoprotein 2 (415 aa).

A signal peptide spans 1-25 (MCLSPVKGAKLILIFLFLGAVQSNA). Positions 26-188 (LIVNLTDSKG…SKNEQVCEED (163 aa)) are first lumenal domain. Over 26–379 (LIVNLTDSKG…AQDCSADEDN (354 aa)) the chain is Lumenal. Residues Asn-29, Asn-45, Asn-54, Asn-57, Asn-97, Asn-115, and Asn-175 are each glycosylated (N-linked (GlcNAc...) asparagine). Cys-37 and Cys-75 are joined by a disulfide. Cysteines 149 and 185 form a disulfide. The tract at residues 189–233 (QTPTTVAPIIHTTAPSTTTTLTPTSTPTPTPTPTPTVGNYSIRNG) is hinge. A compositionally biased stretch (low complexity) spans 202 to 213 (APSTTTTLTPTS). Residues 202–227 (APSTTTTLTPTSTPTPTPTPTPTVGN) are disordered. Residues Asn-227, Asn-234, Asn-247, Asn-265, Asn-280, Asn-312, Asn-317, Asn-322, and Asn-361 are each glycosylated (N-linked (GlcNAc...) asparagine). Residues 234–379 (NTTCLLATMG…AQDCSADEDN (146 aa)) form a second lumenal domain region. A disulfide bridge connects residues Cys-237 and Cys-270. A disulfide bond links Cys-336 and Cys-373. A helical transmembrane segment spans residues 380-404 (FLVPIAVGAALGGVLILVLLAYFIG). Topologically, residues 405-415 (LKRHHTGYEQF) are cytoplasmic. The segment at 406 to 409 (KRHH) is important for binding and subsequent lysosomal degradation of target proteins.

The protein belongs to the LAMP family. As to quaternary structure, monomer. Forms large homooligomers. Interacts (via its cytoplasmic region) with HSPA8; HSPA8 mediates recruitment of proteins with a KFERQ motif to the surface of the lysosome for chaperone-mediated autophagy. Interacts with HSP90 in the lysosome lumen; this enhances LAMP2 stability. Interacts with MLLT11. Interacts with ABCB9. Interacts with FURIN. Interacts with CT55; this interaction may be important for LAMP2 protein stability. Interacts with TMEM175; inhibiting the proton channel activity of TMEM175. Forms a ternary complex with RAB7A and RUFY4 (via RUN domain); the interaction with RAB7A is mediated by RUFY4 (via RUN and coiled coil domains). Post-translationally, extensively N-glycosylated. Contains a minor proportion of O-linked glycans. As to expression, detected in liver and kidney (at protein level). Detected in liver and kidney.

Its subcellular location is the lysosome membrane. The protein resides in the endosome membrane. It is found in the cytoplasmic vesicle. The protein localises to the autophagosome membrane. It localises to the cell membrane. Lysosomal membrane glycoprotein which plays an important role in lysosome biogenesis, lysosomal pH regulation and autophagy. Acts as an important regulator of lysosomal lumen pH regulation by acting as a direct inhibitor of the proton channel TMEM175, facilitating lysosomal acidification for optimal hydrolase activity. Plays an important role in chaperone-mediated autophagy, a process that mediates lysosomal degradation of proteins in response to various stresses and as part of the normal turnover of proteins with a long biological half-live. Functions by binding target proteins, such as GAPDH, NLRP3 and MLLT11, and targeting them for lysosomal degradation. In the chaperone-mediated autophagy, acts downstream of chaperones, such as HSPA8/HSC70, which recognize and bind substrate proteins and mediate their recruitment to lysosomes, where target proteins bind LAMP2. Plays a role in lysosomal protein degradation in response to starvation. Required for the fusion of autophagosomes with lysosomes during autophagy. Cells that lack LAMP2 express normal levels of VAMP8, but fail to accumulate STX17 on autophagosomes, which is the most likely explanation for the lack of fusion between autophagosomes and lysosomes. Required for normal degradation of the contents of autophagosomes. Required for efficient MHC class II-mediated presentation of exogenous antigens via its function in lysosomal protein degradation; antigenic peptides generated by proteases in the endosomal/lysosomal compartment are captured by nascent MHC II subunits. Is not required for efficient MHC class II-mediated presentation of endogenous antigens. The sequence is that of Lysosome-associated membrane glycoprotein 2 (Lamp2) from Mus musculus (Mouse).